Here is a 760-residue protein sequence, read N- to C-terminus: Forkhead box protein M1 (760 aa).

Disordered regions lie at residues 1 to 54 (MRTS…AESS) and 95 to 167 (GKES…SYAG). Low complexity-rich tracts occupy residues 43–54 (PAQASQEVAESS) and 110–124 (SSGG…PQAH). A compositionally biased stretch (basic and acidic residues) spans 125-134 (SSRDSKRAEV). Low complexity predominate over residues 140-149 (GPKPAAKGVP). Glycyl lysine isopeptide (Lys-Gly) (interchain with G-Cter in SUMO2) cross-links involve residues K199 and K323. Positions 233–325 (ERPPYSYMAM…LTLDQVFKPL (93 aa)) form a DNA-binding region, fork-head. The tract at residues 323–348 (KPLEPGSPQSPEHLESQQKRPNPELH) is disordered. S329 is modified (phosphoserine). A compositionally biased stretch (basic and acidic residues) spans 334-348 (EHLESQQKRPNPELH). K354 is covalently cross-linked (Glycyl lysine isopeptide (Lys-Gly) (interchain with G-Cter in SUMO2)). S374 is subject to Phosphoserine; by CHEK2. Glycyl lysine isopeptide (Lys-Gly) (interchain with G-Cter in SUMO2) cross-links involve residues K420 and K438. Disordered regions lie at residues 500 to 560 (SWED…PDLF), 577 to 635 (ESSE…LDFS), and 660 to 709 (PLKS…IPSL). At S521 the chain carries Phosphoserine. The segment covering 531 to 542 (VTKRREKREVSR) has biased composition (basic and acidic residues). The span at 604–613 (PVSSTPSKSV) shows a compositional bias: polar residues. Residue T608 is modified to Phosphothreonine; by CDK1. A Phosphothreonine modification is found at T624. S727 and S736 each carry phosphoserine; by PLK1.

Post-translationally, phosphorylated in M (mitotic) phase. Phosphorylation by the checkpoint kinase CHEK2 in response to DNA damage increases the FOXM1 protein stability probably stimulating the transcription of genes involved in DNA repair. Phosphorylated by CDK1 in late S and G2 phases, creating docking sites for the POLO box domains of PLK1. Subsequently, PLK1 binds and phosphorylates FOXM1, leading to activation of transcriptional activity and subsequent enhanced expression of key mitotic regulators. Phosphorylated by GSK3B leading to ubiquitination and proteasomal degradation. Expressed in fetal heart, brain, liver, lung, kidney and limb, but only in adult thymus. Appears to be expressed only in adult organs containing proliferating/cycling cells or in response to growth factors.

The protein resides in the nucleus. Its function is as follows. Transcription factor regulating the expression of cell cycle genes essential for DNA replication and mitosis. Plays a role in the control of cell proliferation. Also plays a role in DNA break repair, participating in the DNA damage checkpoint response. Promotes transcription of PHB2. This is Forkhead box protein M1 (Foxm1) from Mus musculus (Mouse).